Here is a 561-residue protein sequence, read N- to C-terminus: Putative transport protein KPN78578_08530 (561 aa).

5 helical membrane passes run 8-28 (LLNG…LCLG), 37-57 (LGNS…HFAI), 66-86 (FMLF…SIFF), 94-114 (MLAL…GKVF), and 158-178 (HLSL…IVGA). 2 RCK C-terminal domains span residues 202-288 (LDTD…SFRN) and 292-373 (VFDR…RIGF). The next 5 membrane-spanning stretches (helical) occupy residues 383 to 403 (LLAF…TFQF), 406 to 426 (FSFG…LGFL), 447 to 467 (FGLM…INNG), 478 to 498 (AGLI…AYVL), and 540 to 560 (AIAN…WPGL).

Belongs to the AAE transporter (TC 2.A.81) family. YbjL subfamily.

Its subcellular location is the cell membrane. The chain is Putative transport protein KPN78578_08530 from Klebsiella pneumoniae subsp. pneumoniae (strain ATCC 700721 / MGH 78578).